The chain runs to 185 residues: Thymidine kinase (185 aa).

Residue 8–15 (GPMYSGKT) coordinates ATP. Glutamate 85 acts as the Proton acceptor in catalysis. Phenylalanine 117 contributes to the substrate binding site. 2 residues coordinate Zn(2+): cysteine 142 and cysteine 145. 161-165 (IIEIG) contributes to the substrate binding site. Positions 174 and 177 each coordinate Zn(2+).

Belongs to the thymidine kinase family.

It catalyses the reaction thymidine + ATP = dTMP + ADP + H(+). This chain is Thymidine kinase (TK), found in Choristoneura fumiferana entomopoxvirus (CfEPV).